The following is a 156-amino-acid chain: ATP synthase subunit b (156 aa).

Residues 7–27 (LIGQTVAFIIFVWFCMKFVWP) traverse the membrane as a helical segment.

Belongs to the ATPase B chain family. F-type ATPases have 2 components, F(1) - the catalytic core - and F(0) - the membrane proton channel. F(1) has five subunits: alpha(3), beta(3), gamma(1), delta(1), epsilon(1). F(0) has three main subunits: a(1), b(2) and c(10-14). The alpha and beta chains form an alternating ring which encloses part of the gamma chain. F(1) is attached to F(0) by a central stalk formed by the gamma and epsilon chains, while a peripheral stalk is formed by the delta and b chains.

It is found in the cell inner membrane. Functionally, f(1)F(0) ATP synthase produces ATP from ADP in the presence of a proton or sodium gradient. F-type ATPases consist of two structural domains, F(1) containing the extramembraneous catalytic core and F(0) containing the membrane proton channel, linked together by a central stalk and a peripheral stalk. During catalysis, ATP synthesis in the catalytic domain of F(1) is coupled via a rotary mechanism of the central stalk subunits to proton translocation. Its function is as follows. Component of the F(0) channel, it forms part of the peripheral stalk, linking F(1) to F(0). This Shewanella baltica (strain OS185) protein is ATP synthase subunit b.